We begin with the raw amino-acid sequence, 348 residues long: Nicotinate-nucleotide--dimethylbenzimidazole phosphoribosyltransferase (348 aa).

The active-site Proton acceptor is Glu316.

It belongs to the CobT family.

The enzyme catalyses 5,6-dimethylbenzimidazole + nicotinate beta-D-ribonucleotide = alpha-ribazole 5'-phosphate + nicotinate + H(+). Its pathway is nucleoside biosynthesis; alpha-ribazole biosynthesis; alpha-ribazole from 5,6-dimethylbenzimidazole: step 1/2. Catalyzes the synthesis of alpha-ribazole-5'-phosphate from nicotinate mononucleotide (NAMN) and 5,6-dimethylbenzimidazole (DMB). This is Nicotinate-nucleotide--dimethylbenzimidazole phosphoribosyltransferase from Xanthomonas euvesicatoria pv. vesicatoria (strain 85-10) (Xanthomonas campestris pv. vesicatoria).